The following is a 368-amino-acid chain: Isopentenyl-diphosphate delta-isomerase (368 aa).

7–8 (RK) contacts substrate. FMN is bound by residues T65, 66–68 (GMT), S96, and N125. Position 96-98 (96-98 (SQR)) interacts with substrate. Q160 serves as a coordination point for substrate. E161 lines the Mg(2+) pocket. FMN contacts are provided by residues K193, S218, T223, 275 to 277 (GIR), and 296 to 297 (AL).

The protein belongs to the IPP isomerase type 2 family. In terms of assembly, homooctamer. Dimer of tetramers. Requires FMN as cofactor. The cofactor is NADPH. It depends on Mg(2+) as a cofactor.

Its subcellular location is the cytoplasm. The catalysed reaction is isopentenyl diphosphate = dimethylallyl diphosphate. Functionally, involved in the biosynthesis of isoprenoids. Catalyzes the 1,3-allylic rearrangement of the homoallylic substrate isopentenyl (IPP) to its allylic isomer, dimethylallyl diphosphate (DMAPP). The protein is Isopentenyl-diphosphate delta-isomerase of Saccharolobus shibatae (strain ATCC 51178 / DSM 5389 / JCM 8931 / NBRC 15437 / B12) (Sulfolobus shibatae).